A 495-amino-acid polypeptide reads, in one-letter code: Guanosine-5'-triphosphate,3'-diphosphate pyrophosphatase (495 aa).

Belongs to the GppA/Ppx family. GppA subfamily.

It carries out the reaction guanosine 3'-diphosphate 5'-triphosphate + H2O = guanosine 3',5'-bis(diphosphate) + phosphate + H(+). It participates in purine metabolism; ppGpp biosynthesis; ppGpp from GTP: step 2/2. Functionally, catalyzes the conversion of pppGpp to ppGpp. Guanosine pentaphosphate (pppGpp) is a cytoplasmic signaling molecule which together with ppGpp controls the 'stringent response', an adaptive process that allows bacteria to respond to amino acid starvation, resulting in the coordinated regulation of numerous cellular activities. The chain is Guanosine-5'-triphosphate,3'-diphosphate pyrophosphatase from Enterobacter sp. (strain 638).